The following is a 333-amino-acid chain: Foldase protein PrsA (333 aa).

A signal peptide spans 1 to 21 (MKKRTIATGLVTLLSIVTLAA). Cysteine 22 carries N-palmitoyl cysteine lipidation. The S-diacylglycerol cysteine moiety is linked to residue cysteine 22. Residues 144–237 (KPEVTAQVIQ…PVYYIVKITK (94 aa)) enclose the PpiC domain. The tract at residues 296–333 (AASGSGSSGSTTTTTAASSAATTAADDQTTAAETTAAE) is disordered.

This sequence belongs to the PrsA family.

It is found in the cell membrane. The enzyme catalyses [protein]-peptidylproline (omega=180) = [protein]-peptidylproline (omega=0). Its function is as follows. Plays a major role in protein secretion by helping the post-translocational extracellular folding of several secreted proteins. This is Foldase protein PrsA from Streptococcus mutans serotype c (strain ATCC 700610 / UA159).